The chain runs to 447 residues: MTTILKHLPAGQRIGIAFSGGLDTSAALLWMRQKGAVPYAYTANLGQPDEDDYDAIPRRAMEYGAENARLIDCRKQLVAEGIAAIQCGAFHNTTGGLTYFNTTPLGRAVTGTMLVAAMKEDGVNIWGDGSTYKGNDIERFYRYGLLTNAELQIYKPWLDTDFIDELGGRHEMSEFMIACGFDYKMSVEKAYSTDSNMLGATHEAKDLEFLNSSVKIVNPIMGVKFWDESVKIPAEEVTVRFEQGHPVALNGKTFSDDVEMMLEANRIGGRHGLGMSDQIENRIIEAKSRGIYEAPGMALLHIAYERLLTGIHNEDTIEQYHSHGRQLGKLLYLGRWFDSQALMLRDGLQRWVASQITGEVTLELRRGNDYSILNTVSDNLTYKAERLTMEKGESVFSPDDRIGQLTMRNLDITDTREKLFGYAKAGLLTASSATGLPQVENLENKGK.

Residues 17–25 (AFSGGLDTS) and A43 each bind ATP. Y99 contacts L-citrulline. G129 and T131 together coordinate ATP. T131, N135, and D136 together coordinate L-aspartate. Residue N135 participates in L-citrulline binding. D136 is an ATP binding site. R139 and S192 together coordinate L-citrulline. D194 is a binding site for ATP. T201, E203, and E280 together coordinate L-citrulline.

It belongs to the argininosuccinate synthase family. Type 2 subfamily. As to quaternary structure, homotetramer.

It is found in the cytoplasm. The catalysed reaction is L-citrulline + L-aspartate + ATP = 2-(N(omega)-L-arginino)succinate + AMP + diphosphate + H(+). Its pathway is amino-acid biosynthesis; L-arginine biosynthesis; L-arginine from L-ornithine and carbamoyl phosphate: step 2/3. This chain is Argininosuccinate synthase, found in Salmonella dublin (strain CT_02021853).